The primary structure comprises 515 residues: Membrane-bound lytic murein transglycosylase F (515 aa).

Residues 1–32 form the signal peptide; the sequence is MKKLKINYLFIGILTLLLAAALWPSIPWFGKA. The interval 33–269 is non-LT domain; it reads DNRIAAIQSR…RMEEKYLGHG (237 aa). The LT domain stretch occupies residues 270 to 515; it reads DDFDYVDTRT…PFSLKKKDEN (246 aa). Glu-314 is a catalytic residue. The tract at residues 493-515 is disordered; sequence QPSSNYLSHSPSLPFSLKKKDEN.

This sequence in the N-terminal section; belongs to the bacterial solute-binding protein 3 family. In the C-terminal section; belongs to the transglycosylase Slt family.

Its subcellular location is the cell outer membrane. It carries out the reaction Exolytic cleavage of the (1-&gt;4)-beta-glycosidic linkage between N-acetylmuramic acid (MurNAc) and N-acetylglucosamine (GlcNAc) residues in peptidoglycan, from either the reducing or the non-reducing ends of the peptidoglycan chains, with concomitant formation of a 1,6-anhydrobond in the MurNAc residue.. Its function is as follows. Murein-degrading enzyme that degrades murein glycan strands and insoluble, high-molecular weight murein sacculi, with the concomitant formation of a 1,6-anhydromuramoyl product. Lytic transglycosylases (LTs) play an integral role in the metabolism of the peptidoglycan (PG) sacculus. Their lytic action creates space within the PG sacculus to allow for its expansion as well as for the insertion of various structures such as secretion systems and flagella. The protein is Membrane-bound lytic murein transglycosylase F of Citrobacter koseri (strain ATCC BAA-895 / CDC 4225-83 / SGSC4696).